The sequence spans 590 residues: Aspartate--tRNA(Asp/Asn) ligase (590 aa).

Glutamate 170 is an L-aspartate binding site. The interval 194–197 (QLFK) is aspartate. Arginine 216 is a binding site for L-aspartate. Residues 216–218 (RDE) and glutamine 225 each bind ATP. Histidine 448 contributes to the L-aspartate binding site. Glutamate 482 provides a ligand contact to ATP. Arginine 489 contributes to the L-aspartate binding site. 534 to 537 (GWDR) contacts ATP. The tract at residues 559 to 590 (GGVDPLTEAPAPITAQQRKESGIDAKPGKDGA) is disordered. Over residues 575–590 (QRKESGIDAKPGKDGA) the composition is skewed to basic and acidic residues.

This sequence belongs to the class-II aminoacyl-tRNA synthetase family. Type 1 subfamily. Homodimer.

The protein localises to the cytoplasm. It catalyses the reaction tRNA(Asx) + L-aspartate + ATP = L-aspartyl-tRNA(Asx) + AMP + diphosphate. In terms of biological role, aspartyl-tRNA synthetase with relaxed tRNA specificity since it is able to aspartylate not only its cognate tRNA(Asp) but also tRNA(Asn). Reaction proceeds in two steps: L-aspartate is first activated by ATP to form Asp-AMP and then transferred to the acceptor end of tRNA(Asp/Asn). The chain is Aspartate--tRNA(Asp/Asn) ligase from Mycolicibacterium gilvum (strain PYR-GCK) (Mycobacterium gilvum (strain PYR-GCK)).